Reading from the N-terminus, the 104-residue chain is Pyrimidine/purine nucleoside phosphorylase (104 aa).

Belongs to the nucleoside phosphorylase PpnP family.

The catalysed reaction is a purine D-ribonucleoside + phosphate = a purine nucleobase + alpha-D-ribose 1-phosphate. It carries out the reaction adenosine + phosphate = alpha-D-ribose 1-phosphate + adenine. The enzyme catalyses cytidine + phosphate = cytosine + alpha-D-ribose 1-phosphate. It catalyses the reaction guanosine + phosphate = alpha-D-ribose 1-phosphate + guanine. The catalysed reaction is inosine + phosphate = alpha-D-ribose 1-phosphate + hypoxanthine. It carries out the reaction thymidine + phosphate = 2-deoxy-alpha-D-ribose 1-phosphate + thymine. The enzyme catalyses uridine + phosphate = alpha-D-ribose 1-phosphate + uracil. It catalyses the reaction xanthosine + phosphate = alpha-D-ribose 1-phosphate + xanthine. Catalyzes the phosphorolysis of diverse nucleosides, yielding D-ribose 1-phosphate and the respective free bases. Can use uridine, adenosine, guanosine, cytidine, thymidine, inosine and xanthosine as substrates. Also catalyzes the reverse reactions. This Colwellia psychrerythraea (strain 34H / ATCC BAA-681) (Vibrio psychroerythus) protein is Pyrimidine/purine nucleoside phosphorylase.